Reading from the N-terminus, the 214-residue chain is tRNA (guanine-N(7)-)-methyltransferase (214 aa).

S-adenosyl-L-methionine is bound by residues glutamate 43, glutamate 68, aspartate 95, and aspartate 117. The active site involves aspartate 117. Residues lysine 121, aspartate 153, and 190–193 (TEYE) contribute to the substrate site.

It belongs to the class I-like SAM-binding methyltransferase superfamily. TrmB family.

The enzyme catalyses guanosine(46) in tRNA + S-adenosyl-L-methionine = N(7)-methylguanosine(46) in tRNA + S-adenosyl-L-homocysteine. The protein operates within tRNA modification; N(7)-methylguanine-tRNA biosynthesis. In terms of biological role, catalyzes the formation of N(7)-methylguanine at position 46 (m7G46) in tRNA. In Staphylococcus aureus (strain JH1), this protein is tRNA (guanine-N(7)-)-methyltransferase.